The following is a 315-amino-acid chain: N-acetyl-gamma-glutamyl-phosphate reductase (315 aa).

The active site involves Cys-117.

This sequence belongs to the NAGSA dehydrogenase family. Type 2 subfamily.

The protein resides in the cytoplasm. It carries out the reaction N-acetyl-L-glutamate 5-semialdehyde + phosphate + NADP(+) = N-acetyl-L-glutamyl 5-phosphate + NADPH + H(+). Its pathway is amino-acid biosynthesis; L-arginine biosynthesis; N(2)-acetyl-L-ornithine from L-glutamate: step 3/4. Catalyzes the NADPH-dependent reduction of N-acetyl-5-glutamyl phosphate to yield N-acetyl-L-glutamate 5-semialdehyde. This Burkholderia ambifaria (strain ATCC BAA-244 / DSM 16087 / CCUG 44356 / LMG 19182 / AMMD) (Burkholderia cepacia (strain AMMD)) protein is N-acetyl-gamma-glutamyl-phosphate reductase.